A 372-amino-acid polypeptide reads, in one-letter code: Aminomethyltransferase (372 aa).

This sequence belongs to the GcvT family. In terms of assembly, the glycine cleavage system is composed of four proteins: P, T, L and H.

The enzyme catalyses N(6)-[(R)-S(8)-aminomethyldihydrolipoyl]-L-lysyl-[protein] + (6S)-5,6,7,8-tetrahydrofolate = N(6)-[(R)-dihydrolipoyl]-L-lysyl-[protein] + (6R)-5,10-methylene-5,6,7,8-tetrahydrofolate + NH4(+). Its function is as follows. The glycine cleavage system catalyzes the degradation of glycine. The polypeptide is Aminomethyltransferase (Prochlorococcus marinus (strain NATL2A)).